Reading from the N-terminus, the 184-residue chain is Isopentenyl-diphosphate Delta-isomerase (184 aa).

Mn(2+) contacts are provided by His25 and His32. The Nudix hydrolase domain occupies 30-164 (PLHLAFSCWL…PWAFSPWMVL (135 aa)). Cys67 is an active-site residue. His69 is a binding site for Mn(2+). Residue Glu87 coordinates Mg(2+). Residues Glu114 and Glu116 each coordinate Mn(2+). Glu116 is a catalytic residue.

This sequence belongs to the IPP isomerase type 1 family. As to quaternary structure, homodimer. Requires Mg(2+) as cofactor. It depends on Mn(2+) as a cofactor.

It is found in the cytoplasm. The catalysed reaction is isopentenyl diphosphate = dimethylallyl diphosphate. The protein operates within isoprenoid biosynthesis; dimethylallyl diphosphate biosynthesis; dimethylallyl diphosphate from isopentenyl diphosphate: step 1/1. Catalyzes the 1,3-allylic rearrangement of the homoallylic substrate isopentenyl (IPP) to its highly electrophilic allylic isomer, dimethylallyl diphosphate (DMAPP). In Klebsiella pneumoniae (strain 342), this protein is Isopentenyl-diphosphate Delta-isomerase.